Here is a 228-residue protein sequence, read N- to C-terminus: Chaperone protein FanE (228 aa).

The first 19 residues, 1 to 19 (MNKFISIIALCVFSSYANA), serve as a signal peptide directing secretion. A disulfide bond links Cys-157 and Cys-198.

The protein belongs to the periplasmic pilus chaperone family.

The protein localises to the periplasm. In terms of biological role, mediates assembly of pili by forming soluble multimeric complexes with pili subunits as an intermediate step in the assembly process. This protein is involved in K99 pili assembly. The sequence is that of Chaperone protein FanE (fanE) from Escherichia coli.